The following is a 65-amino-acid chain: Large ribosomal subunit protein bL35 (65 aa).

Residues Met-1 to Gln-15 show a composition bias toward basic residues. Residues Met-1–Ala-27 form a disordered region.

Belongs to the bacterial ribosomal protein bL35 family.

In Bordetella petrii (strain ATCC BAA-461 / DSM 12804 / CCUG 43448), this protein is Large ribosomal subunit protein bL35.